The sequence spans 517 residues: Beta-glucosidase 1 (517 aa).

An N-terminal signal peptide occupies residues 1–22 (MEDVLTLITMIVLLLLAFHGFG). Residues Q48, H145, and 190–191 (NE) contribute to the a beta-D-glucoside site. Catalysis depends on E191, which acts as the Proton donor. C210 and C217 are oxidised to a cystine. N216 and N221 each carry an N-linked (GlcNAc...) asparagine glycan. Residues Y333 and E406 each coordinate a beta-D-glucoside. Catalysis depends on E406, which acts as the Nucleophile. N-linked (GlcNAc...) asparagine glycosylation is present at N441. Residues W451 and F467 each coordinate a beta-D-glucoside. N-linked (GlcNAc...) asparagine glycosylation is found at N473 and N512.

Belongs to the glycosyl hydrolase 1 family.

It catalyses the reaction Hydrolysis of terminal, non-reducing beta-D-glucosyl residues with release of beta-D-glucose.. The chain is Beta-glucosidase 1 from Arabidopsis thaliana (Mouse-ear cress).